Consider the following 326-residue polypeptide: tRNA N6-adenosine threonylcarbamoyltransferase (326 aa).

The Fe cation site is built by His-111 and His-115. Residues 134 to 138 (TVSGG), Asp-167, Gly-180, Asp-184, and Asn-268 each bind substrate. Asp-293 provides a ligand contact to Fe cation.

It belongs to the KAE1 / TsaD family. The cofactor is Fe(2+).

It localises to the cytoplasm. It catalyses the reaction L-threonylcarbamoyladenylate + adenosine(37) in tRNA = N(6)-L-threonylcarbamoyladenosine(37) in tRNA + AMP + H(+). Functionally, required for the formation of a threonylcarbamoyl group on adenosine at position 37 (t(6)A37) in tRNAs that read codons beginning with adenine. Is involved in the transfer of the threonylcarbamoyl moiety of threonylcarbamoyl-AMP (TC-AMP) to the N6 group of A37, together with TsaE and TsaB. TsaD likely plays a direct catalytic role in this reaction. The polypeptide is tRNA N6-adenosine threonylcarbamoyltransferase (Dehalococcoides mccartyi (strain ATCC BAA-2100 / JCM 16839 / KCTC 5957 / BAV1)).